The chain runs to 651 residues: Coronin-like protein (651 aa).

WD repeat units follow at residues 79–110 (GHTAQVLDTDFDPFNDHRIASGSDDSKIGIWD), 138–169 (GHARKVGHVLYHPVAENVLASSSGDYTVKLWN), 180–210 (KHPDMVTSMSFSYDGNYLATVARDKKLRVWN), and 226–257 (AKNQRVVWLGNSDRLATTGFSKLSDRQIGIWD). The interval 408 to 609 (APSFHEAKRP…TSPKSLGLKK (202 aa)) is disordered. Residues 427 to 451 (LEEKKEQPKVEKPISESEKEVKQEA) are compositionally biased toward basic and acidic residues. Serine 441, serine 454, and serine 456 each carry phosphoserine. Over residues 452-465 (PKSPSPLKSASSSS) the composition is skewed to low complexity. Residues threonine 517 and threonine 529 each carry the phosphothreonine modification. 2 stretches are compositionally biased toward basic and acidic residues: residues 523 to 540 (ETKKDRTPKVEPSKELKP) and 547 to 572 (TDRKQEQSLPQEEKSSEKTKSPEQEK). Serine 573 and serine 579 each carry phosphoserine. Residues 578 to 590 (SSITAAKTAITAS) are compositionally biased toward low complexity. Residues 618–650 (VLQLEDVVDKLTKANLDKDERLLKLEQKIGELS) adopt a coiled-coil conformation.

This sequence belongs to the WD repeat coronin family. As to quaternary structure, binds to F-actin.

The sequence is that of Coronin-like protein (CRN1) from Saccharomyces cerevisiae (strain ATCC 204508 / S288c) (Baker's yeast).